A 258-amino-acid chain; its full sequence is Imidazole glycerol phosphate synthase subunit HisF (258 aa).

Active-site residues include aspartate 11 and aspartate 130.

Belongs to the HisA/HisF family. Heterodimer of HisH and HisF.

Its subcellular location is the cytoplasm. It catalyses the reaction 5-[(5-phospho-1-deoxy-D-ribulos-1-ylimino)methylamino]-1-(5-phospho-beta-D-ribosyl)imidazole-4-carboxamide + L-glutamine = D-erythro-1-(imidazol-4-yl)glycerol 3-phosphate + 5-amino-1-(5-phospho-beta-D-ribosyl)imidazole-4-carboxamide + L-glutamate + H(+). It functions in the pathway amino-acid biosynthesis; L-histidine biosynthesis; L-histidine from 5-phospho-alpha-D-ribose 1-diphosphate: step 5/9. Its function is as follows. IGPS catalyzes the conversion of PRFAR and glutamine to IGP, AICAR and glutamate. The HisF subunit catalyzes the cyclization activity that produces IGP and AICAR from PRFAR using the ammonia provided by the HisH subunit. This is Imidazole glycerol phosphate synthase subunit HisF from Escherichia coli (strain ATCC 8739 / DSM 1576 / NBRC 3972 / NCIMB 8545 / WDCM 00012 / Crooks).